Here is a 288-residue protein sequence, read N- to C-terminus: L-threonine kinase (288 aa).

Position 80–90 (80–90) interacts with ATP; it reads PIAKGMASSTA.

It belongs to the GHMP kinase family. PduX subfamily.

It is found in the cytoplasm. The enzyme catalyses L-threonine + ATP = O-phospho-L-threonine + ADP + H(+). It functions in the pathway cofactor biosynthesis; adenosylcobalamin biosynthesis. Its pathway is polyol metabolism; 1,2-propanediol degradation. Its function is as follows. L-threonine kinase that catalyzes the conversion of L-threonine to L-threonine-O-3-phosphate. Involved in the de novo synthesis of adenosylcobalamin (coenzyme B12) and the assimilation of cobyric acid. In terms of biological role, expression of a cosmid containing the full 21-gene pdu operon in E.coli allows E.coli to grow on 1,2-propanediol (1,2-PD) with the appearance of bacterial microcompartments (BMC) in its cytoplasm. The 1,2-PD-specific bacterial microcompartment (BMC) concentrates low levels of 1,2-PD catabolic enzymes, concentrates volatile reaction intermediates thus enhancing pathway flux and keeps the level of toxic, mutagenic propionaldehyde low. This gene probably benefits from its induction via the Pdu promoter, rather than a physical interaction with the BMC. This is L-threonine kinase from Citrobacter freundii.